A 237-amino-acid chain; its full sequence is Ribose-5-phosphate isomerase A (237 aa).

Substrate is bound by residues 28–31 (SGST), 83–86 (DGAD), and 97–100 (KGRG). The active-site Proton acceptor is the Glu106. Lys124 lines the substrate pocket.

Belongs to the ribose 5-phosphate isomerase family. In terms of assembly, homodimer.

It catalyses the reaction aldehydo-D-ribose 5-phosphate = D-ribulose 5-phosphate. It participates in carbohydrate degradation; pentose phosphate pathway; D-ribose 5-phosphate from D-ribulose 5-phosphate (non-oxidative stage): step 1/1. In terms of biological role, catalyzes the reversible conversion of ribose-5-phosphate to ribulose 5-phosphate. This Thermomicrobium roseum (strain ATCC 27502 / DSM 5159 / P-2) protein is Ribose-5-phosphate isomerase A.